The following is a 172-amino-acid chain: Keratin-associated protein 13-3 (172 aa).

5 repeat units span residues 46 to 55, 56 to 65, 66 to 75, 76 to 85, and 92 to 101. Positions 46–101 are 5 X 10 AA approximate repeats; that stretch reads CQLGSSLYRGCQETCWRPNSCQTLCVESSPCHTSCYYPRTHMLCNSCLTMHVGSRG.

This sequence belongs to the PMG family. Interacts with hair keratins.

Its function is as follows. In the hair cortex, hair keratin intermediate filaments are embedded in an interfilamentous matrix, consisting of hair keratin-associated proteins (KRTAP), which are essential for the formation of a rigid and resistant hair shaft through their extensive disulfide bond cross-linking with abundant cysteine residues of hair keratins. The matrix proteins include the high-sulfur and high-glycine-tyrosine keratins. The polypeptide is Keratin-associated protein 13-3 (KRTAP13-3) (Homo sapiens (Human)).